The chain runs to 368 residues: Trans-enoyl reductase thnE (368 aa).

53–56 (VDVK) is a binding site for NADP(+). Residue 140-147 (LATATAAY) coordinates substrate. Residues 179–182 (STAT), 202–205 (SPSN), Tyr-220, and 267–268 (VE) contribute to the NADP(+) site. 289 to 293 (VMTVW) contacts substrate. 358–359 (PS) is a binding site for NADP(+).

Belongs to the zinc-containing alcohol dehydrogenase family. As to quaternary structure, monomer.

It carries out the reaction malate + 6 malonyl-CoA + acetyl-CoA + 2 AH2 + 2 S-adenosyl-L-methionine + 5 NADPH + 9 H(+) = trihazone A + 2 A + 2 S-adenosyl-L-homocysteine + 6 CO2 + 5 NADP(+) + 7 CoA + 6 H2O. The protein operates within secondary metabolite biosynthesis. Its function is as follows. Trans-enoyl reductase; part of the gene cluster that produces the tetronate natural products trihazones. The PKS-NRPS synthetase thnA with the help of the trans-enoyl reductase thnE are responsible for the synthesis of the carboxylmethyl containing trihazone A. The PKS portion of thnA synthesizes beta-keto-triene chain from one acetyl-CoA and 6 equivalents of malonyl-CoA, in collaboration with thnE, which selectively reduces the enoyl intermediate during the first and fourth iteration of the PKS. The NRPS domain selects and activates malate, of which the alpha-hydroxyl group attacks the completed polyketide acyl-S-ACP chain to form the ester product. Intramolecular Dieckmann cyclization catalyzed by the terminal reductase domain releases the product as trihazone A from the PKS-NPRS. The pathway begins with the formation of trihazone A by the hybrid PKS-NRPS synthetase thnA and the trans-enoyl reductase thnE. Trihazone A is further decarboxylated by the 2-oxoglutarate-dependent dioxygenase thnC to produce trihazone D. The function of the FAD-dependent monooxygenase thnD has still to be identified. The protein is Trans-enoyl reductase thnE of Trichoderma harzianum (Hypocrea lixii).